The following is a 274-amino-acid chain: 2,3,4,5-tetrahydropyridine-2,6-dicarboxylate N-succinyltransferase (274 aa).

The substrate site is built by R104 and D141.

This sequence belongs to the transferase hexapeptide repeat family. In terms of assembly, homotrimer.

It localises to the cytoplasm. The enzyme catalyses (S)-2,3,4,5-tetrahydrodipicolinate + succinyl-CoA + H2O = (S)-2-succinylamino-6-oxoheptanedioate + CoA. It functions in the pathway amino-acid biosynthesis; L-lysine biosynthesis via DAP pathway; LL-2,6-diaminopimelate from (S)-tetrahydrodipicolinate (succinylase route): step 1/3. The sequence is that of 2,3,4,5-tetrahydropyridine-2,6-dicarboxylate N-succinyltransferase from Wigglesworthia glossinidia brevipalpis.